We begin with the raw amino-acid sequence, 123 residues long: Small ribosomal subunit protein uS12 (123 aa).

Position 89 is a 3-methylthioaspartic acid (Asp-89).

Belongs to the universal ribosomal protein uS12 family. As to quaternary structure, part of the 30S ribosomal subunit. Contacts proteins S8 and S17. May interact with IF1 in the 30S initiation complex.

With S4 and S5 plays an important role in translational accuracy. Functionally, interacts with and stabilizes bases of the 16S rRNA that are involved in tRNA selection in the A site and with the mRNA backbone. Located at the interface of the 30S and 50S subunits, it traverses the body of the 30S subunit contacting proteins on the other side and probably holding the rRNA structure together. The combined cluster of proteins S8, S12 and S17 appears to hold together the shoulder and platform of the 30S subunit. The protein is Small ribosomal subunit protein uS12 of Caulobacter sp. (strain K31).